A 237-amino-acid chain; its full sequence is Lectin alpha chain (237 aa).

Mn(2+) is bound by residues Glu8 and Asp10. Ca(2+) is bound by residues Asp10, Tyr12, Asn14, and Asp19. Residue Tyr12 participates in a carbohydrate binding. Residues Asp19, His24, and Ser34 each coordinate Mn(2+). 99 to 100 (LY) contacts a carbohydrate. Ca(2+) is bound at residue Asp208. Arg228 lines the a carbohydrate pocket.

It belongs to the leguminous lectin family. As to quaternary structure, equilibrium between homodimer and homotetramer. Oligomerization is pH-dependent with homotetramers forming at pH 6.5 and above. The beta and gamma chains are produced by partial proteolytic processing of the lectin alpha chain by an asparaginyl endopeptidase. Mixture of 60% alpha lectin and 40% of its beta and gamma proteolytic fragments.

In terms of biological role, D-mannose/D-glucose-binding lectin. Has anti-inflammatory activity in rats. Induces histamine release in mast cells from rat. Induces lymphocyte proliferation and IFNG production. The chain is Lectin alpha chain from Dioclea guianensis.